The following is a 161-amino-acid chain: Probable ubiquitin-conjugating enzyme E2 16 (161 aa).

Residues 15 to 161 (IATNRLQKEL…TRWWFHDDKV (147 aa)) form the UBC core domain. Cys99 acts as the Glycyl thioester intermediate in catalysis.

Belongs to the ubiquitin-conjugating enzyme family.

It carries out the reaction S-ubiquitinyl-[E1 ubiquitin-activating enzyme]-L-cysteine + [E2 ubiquitin-conjugating enzyme]-L-cysteine = [E1 ubiquitin-activating enzyme]-L-cysteine + S-ubiquitinyl-[E2 ubiquitin-conjugating enzyme]-L-cysteine.. It functions in the pathway protein modification; protein ubiquitination. In terms of biological role, accepts the ubiquitin from the E1 complex and catalyzes its covalent attachment to other proteins. This Arabidopsis thaliana (Mouse-ear cress) protein is Probable ubiquitin-conjugating enzyme E2 16 (UBC16).